The chain runs to 403 residues: Serine/threonine transporter SstT (403 aa).

The next 10 helical transmembrane spans lie at 15–35 (LGLI…AIVW), 49–69 (FISA…MTAI), 85–105 (LLYV…SFIF), 142–162 (ALLN…GMML), 183–203 (IVQL…AGTL), 218–238 (LAVI…LIVF), 246–268 (YPLV…SSAA), 289–309 (ISIP…ISVI), 317–337 (LGIG…SLAA), and 362–382 (PDVA…QDAT).

Belongs to the dicarboxylate/amino acid:cation symporter (DAACS) (TC 2.A.23) family.

The protein localises to the cell inner membrane. It catalyses the reaction L-serine(in) + Na(+)(in) = L-serine(out) + Na(+)(out). The catalysed reaction is L-threonine(in) + Na(+)(in) = L-threonine(out) + Na(+)(out). Functionally, involved in the import of serine and threonine into the cell, with the concomitant import of sodium (symport system). This chain is Serine/threonine transporter SstT, found in Chromohalobacter salexigens (strain ATCC BAA-138 / DSM 3043 / CIP 106854 / NCIMB 13768 / 1H11).